Reading from the N-terminus, the 135-residue chain is ATP synthase epsilon chain (135 aa).

The protein belongs to the ATPase epsilon chain family. In terms of assembly, F-type ATPases have 2 components, CF(1) - the catalytic core - and CF(0) - the membrane proton channel. CF(1) has five subunits: alpha(3), beta(3), gamma(1), delta(1), epsilon(1). CF(0) has three main subunits: a, b and c.

Its subcellular location is the cell inner membrane. Functionally, produces ATP from ADP in the presence of a proton gradient across the membrane. The polypeptide is ATP synthase epsilon chain (Rhodopseudomonas palustris (strain BisB18)).